A 514-amino-acid chain; its full sequence is Extracellular exo-inulinase inuE (514 aa).

An N-terminal signal peptide occupies residues 1 to 18 (MRAFLALIFLTFVMNVES). Residues 33-34 (ND) and glutamine 52 contribute to the substrate site. The active-site Nucleophile is aspartate 34. Asparagine 56 carries an N-linked (GlcNAc...) asparagine glycan. Substrate is bound by residues tryptophan 60 and serine 95. Residues asparagine 104 and asparagine 110 are each glycosylated (N-linked (GlcNAc...) asparagine). 162–163 (RD) lines the substrate pocket. N-linked (GlcNAc...) asparagine glycosylation is found at asparagine 197 and asparagine 203. The substrate site is built by glutamate 214 and tryptophan 300. Residue glutamate 214 is the Proton donor/acceptor of the active site. Residues asparagine 357, asparagine 371, asparagine 389, and asparagine 422 are each glycosylated (N-linked (GlcNAc...) asparagine).

This sequence belongs to the glycosyl hydrolase 32 family.

It is found in the secreted. The enzyme catalyses Hydrolysis of terminal, non-reducing (2-&gt;1)- and (2-&gt;6)-linked beta-D-fructofuranose residues in fructans.. In terms of biological role, exo-inulinase involved in utilization of the plant storage polymer inulin, consisting of fructooligosaccharides with a degree of polymerization (DP) value from 2 to 60. Splits off terminal fructose units successively from the non-reducing end of the inulin molecule. This is Extracellular exo-inulinase inuE from Meyerozyma guilliermondii (Yeast).